The sequence spans 806 residues: Integrin beta-7 (806 aa).

A signal peptide spans Met1 to Ser19. Topologically, residues Glu20–Arg724 are extracellular. The 49-residue stretch at Ser44–Pro92 folds into the PSI domain. Cystine bridges form between Cys51–Cys476, Cys54–Cys80, Cys64–Cys91, Cys216–Cys223, Cys271–Cys311, Cys412–Cys428, Cys448–Cys474, Cys478–Cys497, Cys488–Cys500, Cys502–Cys511, Cys513–Cys545, Cys527–Cys543, Cys537–Cys548, Cys550–Cys559, Cys561–Cys582, Cys566–Cys580, Cys574–Cys585, Cys587–Cys596, Cys598–Cys621, Cys605–Cys619, Cys613–Cys624, Cys626–Cys635, Cys638–Cys641, Cys645–Cys688, Cys651–Cys670, and Cys654–Cys666. N-linked (GlcNAc...) asparagine glycosylation is present at Asn68. The span at Glu98–Gln107 shows a compositional bias: basic and acidic residues. The segment at Glu98–Leu123 is disordered. The VWFA domain maps to Tyr150–Leu389. The Mg(2+) site is built by Ser161 and Ser163. Ca(2+) is bound by residues Ser163, Asp166, Asp167, and Asp198. Asn250 carries an N-linked (GlcNAc...) asparagine glycan. Ca(2+)-binding residues include Asn254, Asp256, Pro258, and Glu259. A Mg(2+)-binding site is contributed by Glu259. A glycan (N-linked (GlcNAc...) asparagine) is linked at Asn279. Ca(2+) contacts are provided by Asp289 and Glu373. Asn434 is a glycosylation site (N-linked (GlcNAc...) asparagine). 4 consecutive I-EGF domains span residues Cys478–Glu512, Cys513–Glu560, Cys561–Glu597, and Cys598–Asp636. The N-linked (GlcNAc...) asparagine glycan is linked to Asn531. The N-linked (GlcNAc...) asparagine glycan is linked to Asn590. Asn665 and Asn674 each carry an N-linked (GlcNAc...) asparagine glycan. A helical membrane pass occupies residues Ala725–Tyr745. Over Arg746–Asp806 the chain is Cytoplasmic. The segment at Asn786–Asp806 is disordered.

This sequence belongs to the integrin beta chain family. As to quaternary structure, heterodimer of an alpha and a beta subunit. ITGB7/beta-7 associates with either ITGA4/alpha-4 or ITGAE/alpha-E. Integrin ITGA4/ITGB7 interacts with MADCAM1. Integrin ITGA4/ITGB7 interacts with VCAM1 and fibronectin. Interacts with FLNA (via filamin repeats 4, 9, 12, 17, 19, 21, and 23).

Its subcellular location is the cell membrane. In terms of biological role, integrin ITGA4/ITGB7 (alpha-4/beta-7) (Peyer patches-specific homing receptor LPAM-1) is an adhesion molecule that mediates lymphocyte migration and homing to gut-associated lymphoid tissue (GALT). Integrin ITGA4/ITGB7 interacts with the cell surface adhesion molecules MADCAM1 which is normally expressed by the vascular endothelium of the gastrointestinal tract. Also interacts with VCAM1 and fibronectin, an extracellular matrix component. It recognizes one or more domains within the alternatively spliced CS-1 region of fibronectin. Interactions involve the tripeptide L-D-T in MADCAM1, and L-D-V in fibronectin. Integrin ITGAE/ITGB7 (alpha-E/beta-7, HML-1) is a receptor for E-cadherin. In Mus musculus (Mouse), this protein is Integrin beta-7 (Itgb7).